The primary structure comprises 180 residues: Small ribosomal subunit protein uS5 (180 aa).

The segment at 1-26 (MAEEKDKKQSSRRRNNRRTEKESEWQ) is disordered. Positions 17-26 (RRTEKESEWQ) are enriched in basic and acidic residues. Residues 25–88 (WQERVVQIRR…ADGKKHLVNV (64 aa)) enclose the S5 DRBM domain.

This sequence belongs to the universal ribosomal protein uS5 family. As to quaternary structure, part of the 30S ribosomal subunit. Contacts proteins S4 and S8.

With S4 and S12 plays an important role in translational accuracy. In terms of biological role, located at the back of the 30S subunit body where it stabilizes the conformation of the head with respect to the body. This Synechococcus elongatus (strain ATCC 33912 / PCC 7942 / FACHB-805) (Anacystis nidulans R2) protein is Small ribosomal subunit protein uS5.